Consider the following 283-residue polypeptide: Thymidylate synthase (283 aa).

Position 22 (Arg22) interacts with dUMP. The Nucleophile role is filled by Cys160. DUMP-binding positions include 180 to 183 (RSCD), Asn191, and 221 to 223 (HIY). Asp183 is a (6R)-5,10-methylene-5,6,7,8-tetrahydrofolate binding site. Ser282 is a binding site for (6R)-5,10-methylene-5,6,7,8-tetrahydrofolate.

The protein belongs to the thymidylate synthase family. Bacterial-type ThyA subfamily. Homodimer.

The protein localises to the cytoplasm. It carries out the reaction dUMP + (6R)-5,10-methylene-5,6,7,8-tetrahydrofolate = 7,8-dihydrofolate + dTMP. The protein operates within pyrimidine metabolism; dTTP biosynthesis. In terms of biological role, catalyzes the reductive methylation of 2'-deoxyuridine-5'-monophosphate (dUMP) to 2'-deoxythymidine-5'-monophosphate (dTMP) while utilizing 5,10-methylenetetrahydrofolate (mTHF) as the methyl donor and reductant in the reaction, yielding dihydrofolate (DHF) as a by-product. This enzymatic reaction provides an intracellular de novo source of dTMP, an essential precursor for DNA biosynthesis. The sequence is that of Thymidylate synthase from Vibrio parahaemolyticus serotype O3:K6 (strain RIMD 2210633).